We begin with the raw amino-acid sequence, 298 residues long: Phospholipase A1 (298 aa).

Residues C4 and C87 are joined by a disulfide bond. N88 and N122 each carry an N-linked (GlcNAc...) asparagine glycan. Residue S134 is the Nucleophile of the active site. The active-site Charge relay system is the D162. Disulfide bonds link C173–C178 and C216–C225. H227 serves as the catalytic Charge relay system. Cystine bridges form between C242-C266, C243-C291, and C259-C264.

The protein belongs to the AB hydrolase superfamily. Lipase family. Expressed by the venom gland.

The protein resides in the secreted. It catalyses the reaction a 1,2-diacyl-sn-glycero-3-phosphocholine + H2O = a 2-acyl-sn-glycero-3-phosphocholine + a fatty acid + H(+). Functionally, catalyzes the hydrolysis of phosphatidylcholine with phospholipase A1 activity. May act as an allergen and induce hemolytic activity. The polypeptide is Phospholipase A1 (Vespula squamosa (Southern yellow jacket)).